The following is a 110-amino-acid chain: Large ribosomal subunit protein uL22 (110 aa).

Belongs to the universal ribosomal protein uL22 family. In terms of assembly, part of the 50S ribosomal subunit.

Functionally, this protein binds specifically to 23S rRNA; its binding is stimulated by other ribosomal proteins, e.g. L4, L17, and L20. It is important during the early stages of 50S assembly. It makes multiple contacts with different domains of the 23S rRNA in the assembled 50S subunit and ribosome. The globular domain of the protein is located near the polypeptide exit tunnel on the outside of the subunit, while an extended beta-hairpin is found that lines the wall of the exit tunnel in the center of the 70S ribosome. The chain is Large ribosomal subunit protein uL22 from Methylococcus capsulatus (strain ATCC 33009 / NCIMB 11132 / Bath).